Here is a 320-residue protein sequence, read N- to C-terminus: Aspartate carbamoyltransferase catalytic subunit (320 aa).

Positions 57 and 58 each coordinate carbamoyl phosphate. K85 is an L-aspartate binding site. 3 residues coordinate carbamoyl phosphate: R107, H141, and Q144. L-aspartate is bound by residues R174 and R228. Carbamoyl phosphate-binding residues include G269 and P270.

This sequence belongs to the aspartate/ornithine carbamoyltransferase superfamily. ATCase family. In terms of assembly, heterododecamer (2C3:3R2) of six catalytic PyrB chains organized as two trimers (C3), and six regulatory PyrI chains organized as three dimers (R2).

The enzyme catalyses carbamoyl phosphate + L-aspartate = N-carbamoyl-L-aspartate + phosphate + H(+). It participates in pyrimidine metabolism; UMP biosynthesis via de novo pathway; (S)-dihydroorotate from bicarbonate: step 2/3. Its function is as follows. Catalyzes the condensation of carbamoyl phosphate and aspartate to form carbamoyl aspartate and inorganic phosphate, the committed step in the de novo pyrimidine nucleotide biosynthesis pathway. The sequence is that of Aspartate carbamoyltransferase catalytic subunit from Mycobacterium marinum (strain ATCC BAA-535 / M).